The sequence spans 818 residues: Probable helicase MAGATAMA 3 (818 aa).

Residues 259-559 (NKSQKEAIDV…KMLKTQYRMH (301 aa)) enclose the UvrD-like helicase ATP-binding domain. 280-287 (GPPGTGKT) contributes to the ATP binding site. Acidic residues-rich tracts occupy residues 781–790 (PDAPLYEDES) and 798–818 (GDDDFGDGDADQDDVAMAGED). The segment at 781 to 818 (PDAPLYEDESLPVAPYGGDDDFGDGDADQDDVAMAGED) is disordered.

Belongs to the helicase family. As to expression, expressed in flowers, siliques, leaves, roots and shoot apex.

It is found in the nucleus. Probable helicase that may regulate RNA molecules involved in nucleolar organization and pollen tube guidance. This is Probable helicase MAGATAMA 3 (MAA3) from Arabidopsis thaliana (Mouse-ear cress).